A 189-amino-acid chain; its full sequence is Prostaglandin-H2 D-isomerase (189 aa).

The signal sequence occupies residues 1–24 (MAALRMLWMGLVLLGLLGFPQTPA). A Pyrrolidone carboxylic acid modification is found at Gln25. Residue Asn51 is glycosylated (N-linked (GlcNAc...) asparagine). Cys65 (nucleophile) is an active-site residue. N-linked (GlcNAc...) asparagine glycosylation is present at Asn78. A disulfide bridge connects residues Cys89 and Cys186.

Belongs to the calycin superfamily. Lipocalin family. As to quaternary structure, monomer. As to expression, abundant in the brain and CNS, where it is expressed in tissues of the blood-brain barrier and secreted into the cerebro-spinal fluid. In the male reproductive system, it is expressed in the testis, efferent ducts and epididymis, and is secreted into the seminal fluid. In the eye, it is expressed in the pigmented epithelium of the retina and the nonpigmented epithelium of the ciliary body, and secreted into the aqueous humor. Low levels detected in various tissue fluids such as serum, normal urine, ascitic fluid and tear fluid. Also found in a number of other organs including the ear, heart and lung.

It localises to the rough endoplasmic reticulum. Its subcellular location is the nucleus membrane. The protein resides in the golgi apparatus. The protein localises to the cytoplasm. It is found in the perinuclear region. It localises to the secreted. It carries out the reaction prostaglandin H2 = prostaglandin D2. Catalyzes the conversion of PGH2 to PGD2, a prostaglandin involved in smooth muscle contraction/relaxation and a potent inhibitor of platelet aggregation. Involved in a variety of CNS functions, such as sedation, NREM sleep and PGE2-induced allodynia, and may have an anti-apoptotic role in oligodendrocytes. Binds small non-substrate lipophilic molecules, including biliverdin, bilirubin, retinal, retinoic acid and thyroid hormone, and may act as a scavenger for harmful hydrophobic molecules and as a secretory retinoid and thyroid hormone transporter. Possibly involved in development and maintenance of the blood-brain, blood-retina, blood-aqueous humor and blood-testis barrier. It is likely to play important roles in both maturation and maintenance of the central nervous system and male reproductive system. Involved in PLA2G3-dependent maturation of mast cells. PLA2G3 is secreted by immature mast cells and acts on nearby fibroblasts upstream to PTDGS to synthesize PGD2, which in turn promotes mast cell maturation and degranulation via PTGDR. This is Prostaglandin-H2 D-isomerase (Ptgds) from Mus musculus (Mouse).